The following is an 898-amino-acid chain: Netrin receptor UNC5A (898 aa).

The N-terminal stretch at 1 to 25 (MAVRPGLWPALLGIVLTAWLRGSGA) is a signal peptide. Over 26–361 (QQSATVANPV…TSSGPEDVAL (336 aa)) the chain is Extracellular. The Ig-like domain maps to 44-141 (PHFLVEPEDV…SGTTKSQKAY (98 aa)). Intrachain disulfides connect cysteine 65-cysteine 126, cysteine 77-cysteine 124, and cysteine 170-cysteine 221. Asparagine 107 and asparagine 218 each carry an N-linked (GlcNAc...) asparagine glycan. The Ig-like C2-type domain maps to 155–234 (PLAKEVSLEQ…NIVARRRSAS (80 aa)). 2 TSP type-1 domains span residues 242–296 (NGGW…TLCP) and 298–350 (DGSW…DLCL). Residues tryptophan 245, tryptophan 248, and tryptophan 251 are each glycosylated (C-linked (Man) tryptophan). Cystine bridges form between cysteine 254–cysteine 291, cysteine 258–cysteine 295, and cysteine 269–cysteine 281. C-linked (Man) tryptophan glycans are attached at residues tryptophan 301 and tryptophan 304. 3 cysteine pairs are disulfide-bonded: cysteine 310–cysteine 344, cysteine 314–cysteine 349, and cysteine 322–cysteine 334. Asparagine 343 carries an N-linked (GlcNAc...) asparagine glycan. A helical transmembrane segment spans residues 362 to 382 (YIGLVAVAVCLILLLLVLVLI). The Cytoplasmic segment spans residues 383-898 (YCRKKEGLDS…GLFTVSEAEC (516 aa)). A ZU5 domain is found at 497-640 (NMAYGTFNFL…LGRFALVGEA (144 aa)). The interval 661-679 (SLEYNIRVYCLHDTHDALK) is interaction with DCC. The region spanning 817 to 897 (QKIITSLDPP…AGLFTVSEAE (81 aa)) is the Death domain.

Belongs to the unc-5 family. As to quaternary structure, homodimer and homooligomer. Interacts with the cytoplasmic part of DCC. Interacts with MAGED1. Interacts with PRKCABP, possibly mediating some interaction with PKC. Interacts (via extracellular domain) with FLRT2 (via extracellular domain). Interacts (via extracellular domain) with FLRT3 (via extracellular domain). Phosphorylated on cytoplasmic tyrosine residues. Phosphorylated by PKC in vitro. In terms of processing, proteolytically cleaved by caspases during apoptosis. The cleavage does not take place when the receptor is associated with netrin ligand. Its cleavage by caspases is required to induce apoptosis. Post-translationally, the two extracellular TSRs of UNC5A contain WxxWxxWxxC motifs that can be C-mannosylated on all tryptophans. DPY19L1 preferentially mannosylates the first two tryptophans and DPY19L3 prefers the third. C-mannosylation by DPY19L1 is required for transport of UNC5A from the endoplasmic reticulum to the cell surface. In terms of tissue distribution, restricted to central nervous system.

The protein resides in the cell membrane. Its subcellular location is the membrane raft. It localises to the cell projection. The protein localises to the neuron projection. Its function is as follows. Receptor for netrin required for axon guidance. Functions in the netrin signaling pathway and promotes neurite outgrowth in response to NTN1. Mediates axon repulsion of neuronal growth cones in the developing nervous system in response to netrin. Axon repulsion in growth cones may be mediated by its association with DCC that may trigger signaling for repulsion. It also acts as a dependence receptor required for apoptosis induction when not associated with netrin ligand. The polypeptide is Netrin receptor UNC5A (Unc5a) (Mus musculus (Mouse)).